A 104-amino-acid polypeptide reads, in one-letter code: Co-chaperonin GroES (104 aa).

It belongs to the GroES chaperonin family. In terms of assembly, heptamer of 7 subunits arranged in a ring. Interacts with the chaperonin GroEL.

Its subcellular location is the cytoplasm. Its function is as follows. Together with the chaperonin GroEL, plays an essential role in assisting protein folding. The GroEL-GroES system forms a nano-cage that allows encapsulation of the non-native substrate proteins and provides a physical environment optimized to promote and accelerate protein folding. GroES binds to the apical surface of the GroEL ring, thereby capping the opening of the GroEL channel. This is Co-chaperonin GroES from Acidiphilium cryptum (strain JF-5).